We begin with the raw amino-acid sequence, 356 residues long: MPISLNPSHSNTQTFKVAAVQAEPVWLDLQGGVEKTIRIINEAAAEGAKIIGFPEVFIPGYPWTPWANNFVDAQVVLKKYQANSMPLHSPEMDRIREAVKEADVNIVLGFSERDGSSLYIAQVTITSDGKIANHRRKIKPTHYEKTIFGDGSAQSIYNVVQTPYGRLGSLNCWEHIQPWLKTHFYSQYPQIFVGGWWPAFPPHTGGSPYIVSGEASSRMSQLVSMEGGLFGIVCCHVVSEAGARKMRMLGFPWFTFPGGGFSVIYGPDGAALTDPVDPGKEVVLYANISLDKIDDVKLVADIMGNYSRFDLFHTTVVNGKNWKPVAYGDPDEQAASKAQQAEIDNAGKGSIVPSKL.

A CN hydrolase domain is found at 15-290; it reads FKVAAVQAEP…EVVLYANISL (276 aa). The active-site Proton acceptor is the glutamate 55. Lysine 137 is an active-site residue. The active-site Nucleophile is the cysteine 172. A disordered region spans residues 331–356; the sequence is DEQAASKAQQAEIDNAGKGSIVPSKL.

The protein belongs to the carbon-nitrogen hydrolase superfamily. Nitrilase family.

The enzyme catalyses formamide = hydrogen cyanide + H2O. Functionally, catalyzes the hydration of cyanide to formamide. Degradation of cyanide may be important for plant pathogenic fungi in infection of cyanogenic plants. The chain is Cyanide hydratase from Armillaria gallica (Bulbous honey fungus).